Consider the following 312-residue polypeptide: tRNA uridine(34) hydroxylase (312 aa).

The region spanning 124–218 is the Rhodanese domain; the sequence is SDPEVLLIDT…YLEEVPQEQT (95 aa). The Cysteine persulfide intermediate role is filled by Cys-178. Basic and acidic residues-rich tracts occupy residues 279–294 and 302–312; these read TRESARERQKQIELAR and IGRDPRQLNEA. The disordered stretch occupies residues 279-312; sequence TRESARERQKQIELARARNQPHPIGRDPRQLNEA.

This sequence belongs to the TrhO family.

The enzyme catalyses uridine(34) in tRNA + AH2 + O2 = 5-hydroxyuridine(34) in tRNA + A + H2O. Catalyzes oxygen-dependent 5-hydroxyuridine (ho5U) modification at position 34 in tRNAs. This chain is tRNA uridine(34) hydroxylase, found in Ectopseudomonas mendocina (strain ymp) (Pseudomonas mendocina).